The chain runs to 43 residues: Protein PsbN (43 aa).

A helical transmembrane segment spans residues 4 to 24 (ATFVAIFISCLLISFTGYALY).

It belongs to the PsbN family.

The protein resides in the plastid. It is found in the chloroplast thylakoid membrane. Its function is as follows. May play a role in photosystem I and II biogenesis. This Marchantia polymorpha (Common liverwort) protein is Protein PsbN.